The chain runs to 217 residues: 3,4-dihydroxy-2-butanone 4-phosphate synthase (217 aa).

D-ribulose 5-phosphate-binding positions include 37-38 (RE), aspartate 42, 150-154 (RGGHT), and glutamate 174. Glutamate 38 lines the Mg(2+) pocket. Residue histidine 153 participates in Mg(2+) binding.

It belongs to the DHBP synthase family. Homodimer. Mg(2+) serves as cofactor. Requires Mn(2+) as cofactor.

The enzyme catalyses D-ribulose 5-phosphate = (2S)-2-hydroxy-3-oxobutyl phosphate + formate + H(+). It participates in cofactor biosynthesis; riboflavin biosynthesis; 2-hydroxy-3-oxobutyl phosphate from D-ribulose 5-phosphate: step 1/1. Functionally, catalyzes the conversion of D-ribulose 5-phosphate to formate and 3,4-dihydroxy-2-butanone 4-phosphate. This is 3,4-dihydroxy-2-butanone 4-phosphate synthase from Cronobacter sakazakii (strain ATCC BAA-894) (Enterobacter sakazakii).